The sequence spans 376 residues: Succinyl-diaminopimelate desuccinylase (376 aa).

Position 68 (histidine 68) interacts with Zn(2+). Residue aspartate 70 is part of the active site. Zn(2+) is bound at residue aspartate 101. Catalysis depends on glutamate 135, which acts as the Proton acceptor. Glutamate 136, glutamate 164, and histidine 349 together coordinate Zn(2+).

The protein belongs to the peptidase M20A family. DapE subfamily. In terms of assembly, homodimer. Zn(2+) is required as a cofactor. Co(2+) serves as cofactor.

It catalyses the reaction N-succinyl-(2S,6S)-2,6-diaminopimelate + H2O = (2S,6S)-2,6-diaminopimelate + succinate. It participates in amino-acid biosynthesis; L-lysine biosynthesis via DAP pathway; LL-2,6-diaminopimelate from (S)-tetrahydrodipicolinate (succinylase route): step 3/3. Its function is as follows. Catalyzes the hydrolysis of N-succinyl-L,L-diaminopimelic acid (SDAP), forming succinate and LL-2,6-diaminopimelate (DAP), an intermediate involved in the bacterial biosynthesis of lysine and meso-diaminopimelic acid, an essential component of bacterial cell walls. This is Succinyl-diaminopimelate desuccinylase from Marinobacter nauticus (strain ATCC 700491 / DSM 11845 / VT8) (Marinobacter aquaeolei).